The chain runs to 346 residues: Holliday junction branch migration complex subunit RuvB (346 aa).

The segment covering 1-11 has biased composition (polar residues); sequence MTEQRTIASSA. Residues 1-20 form a disordered region; sequence MTEQRTIASSATREDEAADA. The segment at 1–183 is large ATPase domain (RuvB-L); it reads MTEQRTIASS…FGIVQRLEFY (183 aa). ATP-binding positions include Ile22, Arg23, Gly64, Lys67, Thr68, Thr69, 130–132, Arg173, Tyr183, and Arg220; that span reads EDF. Thr68 is a Mg(2+) binding site. The segment at 184-254 is small ATPAse domain (RuvB-S); sequence SPQELTRIVI…VAQAAMQMLK (71 aa). The head domain (RuvB-H) stretch occupies residues 257-346; sequence PEGFDELDRR…PAIGEPGDLF (90 aa). Residues Arg293, Arg312, and Arg317 each contribute to the DNA site.

It belongs to the RuvB family. In terms of assembly, homohexamer. Forms an RuvA(8)-RuvB(12)-Holliday junction (HJ) complex. HJ DNA is sandwiched between 2 RuvA tetramers; dsDNA enters through RuvA and exits via RuvB. An RuvB hexamer assembles on each DNA strand where it exits the tetramer. Each RuvB hexamer is contacted by two RuvA subunits (via domain III) on 2 adjacent RuvB subunits; this complex drives branch migration. In the full resolvosome a probable DNA-RuvA(4)-RuvB(12)-RuvC(2) complex forms which resolves the HJ.

Its subcellular location is the cytoplasm. It catalyses the reaction ATP + H2O = ADP + phosphate + H(+). In terms of biological role, the RuvA-RuvB-RuvC complex processes Holliday junction (HJ) DNA during genetic recombination and DNA repair, while the RuvA-RuvB complex plays an important role in the rescue of blocked DNA replication forks via replication fork reversal (RFR). RuvA specifically binds to HJ cruciform DNA, conferring on it an open structure. The RuvB hexamer acts as an ATP-dependent pump, pulling dsDNA into and through the RuvAB complex. RuvB forms 2 homohexamers on either side of HJ DNA bound by 1 or 2 RuvA tetramers; 4 subunits per hexamer contact DNA at a time. Coordinated motions by a converter formed by DNA-disengaged RuvB subunits stimulates ATP hydrolysis and nucleotide exchange. Immobilization of the converter enables RuvB to convert the ATP-contained energy into a lever motion, pulling 2 nucleotides of DNA out of the RuvA tetramer per ATP hydrolyzed, thus driving DNA branch migration. The RuvB motors rotate together with the DNA substrate, which together with the progressing nucleotide cycle form the mechanistic basis for DNA recombination by continuous HJ branch migration. Branch migration allows RuvC to scan DNA until it finds its consensus sequence, where it cleaves and resolves cruciform DNA. The sequence is that of Holliday junction branch migration complex subunit RuvB from Xanthomonas campestris pv. campestris (strain ATCC 33913 / DSM 3586 / NCPPB 528 / LMG 568 / P 25).